A 369-amino-acid chain; its full sequence is Chaperone protein DnaJ (369 aa).

Residues 5–70 form the J domain; that stretch reads DYYEVLGVGR…NKRAAYDQFG (66 aa). The segment at 128 to 206 adopts a CR-type zinc-finger fold; that stretch reads GAETQIRIPR…CHGAGWVKRQ (79 aa). Zn(2+) contacts are provided by Cys-141, Cys-144, Cys-158, Cys-161, Cys-180, Cys-183, Cys-194, and Cys-197. CXXCXGXG motif repeat units follow at residues 141–148, 158–165, 180–187, and 194–201; these read CDTCHGSG, CPTCNGHG, CSHCQGSG, and CGDCHGAG.

This sequence belongs to the DnaJ family. As to quaternary structure, homodimer. The cofactor is Zn(2+).

The protein resides in the cytoplasm. In terms of biological role, participates actively in the response to hyperosmotic and heat shock by preventing the aggregation of stress-denatured proteins and by disaggregating proteins, also in an autonomous, DnaK-independent fashion. Unfolded proteins bind initially to DnaJ; upon interaction with the DnaJ-bound protein, DnaK hydrolyzes its bound ATP, resulting in the formation of a stable complex. GrpE releases ADP from DnaK; ATP binding to DnaK triggers the release of the substrate protein, thus completing the reaction cycle. Several rounds of ATP-dependent interactions between DnaJ, DnaK and GrpE are required for fully efficient folding. Also involved, together with DnaK and GrpE, in the DNA replication of plasmids through activation of initiation proteins. The chain is Chaperone protein DnaJ from Nitrosomonas europaea (strain ATCC 19718 / CIP 103999 / KCTC 2705 / NBRC 14298).